A 241-amino-acid chain; its full sequence is Glucosamine-6-phosphate deaminase (241 aa).

The Proton acceptor; for enolization step role is filled by Asp-67. The active-site For ring-opening step is Asn-136. His-138 serves as the catalytic Proton acceptor; for ring-opening step. Glu-143 (for ring-opening step) is an active-site residue.

It belongs to the glucosamine/galactosamine-6-phosphate isomerase family. NagB subfamily.

It catalyses the reaction alpha-D-glucosamine 6-phosphate + H2O = beta-D-fructose 6-phosphate + NH4(+). It functions in the pathway amino-sugar metabolism; N-acetylneuraminate degradation; D-fructose 6-phosphate from N-acetylneuraminate: step 5/5. In terms of biological role, catalyzes the reversible isomerization-deamination of glucosamine 6-phosphate (GlcN6P) to form fructose 6-phosphate (Fru6P) and ammonium ion. In Clostridium novyi (strain NT), this protein is Glucosamine-6-phosphate deaminase.